Consider the following 147-residue polypeptide: Hemoglobin subunit epsilon (147 aa).

A Globin domain is found at 3-147 (HLTAEEKSSV…VATALAHKYH (145 aa)). 2 positions are modified to phosphoserine: S14 and S51. Heme b contacts are provided by H64 and H93.

Belongs to the globin family. Heterotetramer of two alpha chains and two epsilon chains in early embryonic hemoglobin Gower-2; two zeta chains and two epsilon chains in early embryonic hemoglobin Gower-1. In terms of tissue distribution, red blood cells.

Functionally, the epsilon chain is a beta-type chain of early mammalian embryonic hemoglobin. The sequence is that of Hemoglobin subunit epsilon (HBE1) from Carlito syrichta (Philippine tarsier).